Consider the following 250-residue polypeptide: NAD-dependent protein deacylase 1 (250 aa).

A Deacetylase sirtuin-type domain is found at 1–250; sequence MRAVVELLAG…PELLRRAFPG (250 aa). 19–39 is a binding site for NAD(+); sequence GAGVSAESGIPTFRDALGGLW. Positions 64 and 67 each coordinate substrate. 98-101 is an NAD(+) binding site; the sequence is QNVD. The Proton acceptor role is filled by histidine 116. Zn(2+) contacts are provided by cysteine 124, cysteine 127, cysteine 152, and cysteine 155. NAD(+) is bound by residues 192-194, 218-220, and alanine 236; these read GTS and NPQ.

Belongs to the sirtuin family. Class III subfamily. It depends on Zn(2+) as a cofactor.

Its subcellular location is the cytoplasm. It catalyses the reaction N(6)-acetyl-L-lysyl-[protein] + NAD(+) + H2O = 2''-O-acetyl-ADP-D-ribose + nicotinamide + L-lysyl-[protein]. The enzyme catalyses N(6)-succinyl-L-lysyl-[protein] + NAD(+) + H2O = 2''-O-succinyl-ADP-D-ribose + nicotinamide + L-lysyl-[protein]. Its function is as follows. NAD-dependent lysine deacetylase and desuccinylase that specifically removes acetyl and succinyl groups on target proteins. Modulates the activities of several proteins which are inactive in their acylated form. The sequence is that of NAD-dependent protein deacylase 1 from Pseudomonas aeruginosa (strain ATCC 15692 / DSM 22644 / CIP 104116 / JCM 14847 / LMG 12228 / 1C / PRS 101 / PAO1).